We begin with the raw amino-acid sequence, 89 residues long: Small ribosomal subunit protein uS15 (89 aa).

It belongs to the universal ribosomal protein uS15 family. Part of the 30S ribosomal subunit. Forms a bridge to the 50S subunit in the 70S ribosome, contacting the 23S rRNA.

In terms of biological role, one of the primary rRNA binding proteins, it binds directly to 16S rRNA where it helps nucleate assembly of the platform of the 30S subunit by binding and bridging several RNA helices of the 16S rRNA. Functionally, forms an intersubunit bridge (bridge B4) with the 23S rRNA of the 50S subunit in the ribosome. This chain is Small ribosomal subunit protein uS15, found in Hamiltonella defensa subsp. Acyrthosiphon pisum (strain 5AT).